The sequence spans 128 residues: Small ribosomal subunit protein uS11 (128 aa).

This sequence belongs to the universal ribosomal protein uS11 family. Part of the 30S ribosomal subunit. Interacts with proteins S7 and S18. Binds to IF-3.

Located on the platform of the 30S subunit, it bridges several disparate RNA helices of the 16S rRNA. Forms part of the Shine-Dalgarno cleft in the 70S ribosome. This chain is Small ribosomal subunit protein uS11, found in Acinetobacter baylyi (strain ATCC 33305 / BD413 / ADP1).